The following is a 792-amino-acid chain: Protocadherin beta-18 (792 aa).

The first 26 residues, 1 to 26 (MAARGSCVSRQRQVLFLFLLGGLCLA), serve as a signal peptide directing secretion. 6 Cadherin domains span residues 27–133 (GSEL…SPIF), 134–242 (QDKK…APQF), 243–347 (PQEL…APEL), 348–451 (IMSS…APAF), 452–561 (NQTS…APFV), and 568–676 (ASAP…LPEV). N-linked (GlcNAc...) asparagine glycosylation is present at Asn-169. N-linked (GlcNAc...) asparagine glycosylation is found at Asn-418 and Asn-452. The chain crosses the membrane as a helical span at residues 693-713 (VIALASVSSLFLLSVLLFVGV).

It localises to the cell membrane. Potential calcium-dependent cell-adhesion protein. In Mus musculus (Mouse), this protein is Protocadherin beta-18 (Pcdhb18).